Reading from the N-terminus, the 226-residue chain is PKHD-type hydroxylase Sfri_0612 (226 aa).

In terms of domain architecture, Fe2OG dioxygenase spans 77–177 (KIFPPCFNRY…RIAAITWMQS (101 aa)). Residues H95, D97, and H158 each contribute to the Fe cation site. Residue R168 participates in 2-oxoglutarate binding.

It depends on Fe(2+) as a cofactor. L-ascorbate is required as a cofactor.

This is PKHD-type hydroxylase Sfri_0612 from Shewanella frigidimarina (strain NCIMB 400).